Reading from the N-terminus, the 383-residue chain is Histidinol-phosphate aminotransferase (383 aa).

Lysine 240 is subject to N6-(pyridoxal phosphate)lysine.

The protein belongs to the class-II pyridoxal-phosphate-dependent aminotransferase family. Histidinol-phosphate aminotransferase subfamily. Homodimer. It depends on pyridoxal 5'-phosphate as a cofactor.

The catalysed reaction is L-histidinol phosphate + 2-oxoglutarate = 3-(imidazol-4-yl)-2-oxopropyl phosphate + L-glutamate. The protein operates within amino-acid biosynthesis; L-histidine biosynthesis; L-histidine from 5-phospho-alpha-D-ribose 1-diphosphate: step 7/9. In Oleidesulfovibrio alaskensis (strain ATCC BAA-1058 / DSM 17464 / G20) (Desulfovibrio alaskensis), this protein is Histidinol-phosphate aminotransferase.